A 390-amino-acid chain; its full sequence is Galactokinase (390 aa).

34-37 (EHTD) provides a ligand contact to substrate. ATP-binding positions include Ser-68 and 122–128 (GSGLSSS). 2 residues coordinate Mg(2+): Ser-128 and Glu-160. Asp-172 serves as the catalytic Proton acceptor. Tyr-221 provides a ligand contact to substrate.

This sequence belongs to the GHMP kinase family. GalK subfamily.

It is found in the cytoplasm. It catalyses the reaction alpha-D-galactose + ATP = alpha-D-galactose 1-phosphate + ADP + H(+). It functions in the pathway carbohydrate metabolism; galactose metabolism. Catalyzes the transfer of the gamma-phosphate of ATP to D-galactose to form alpha-D-galactose-1-phosphate (Gal-1-P). In Chloroflexus aurantiacus (strain ATCC 29366 / DSM 635 / J-10-fl), this protein is Galactokinase.